The chain runs to 313 residues: MTQWQPASPTLWQGRDDSAEAANALRLFQTVTRSPTFSPEMYREKIALLGFACDEGVKRNQGRPGAAGAPDALRRALANLASHHGHDRLVDLGNIIAQAPDLEGAQQALRDAVRRCQQADMRTFVLGGGHETAFGHGAGLLDAFPHARVGIINLDAHLDLRRADHATSGTPFRQLAQLCDEQQREFHYACFGVSRAANTQALWDEAQQRGVTIVEDVDCDTAQAPLAQVIDSVDKIYLTIDLDVLPAWEMPAVSAPAALGVPLATVMRLVDAVCRSGKLQAVDMVEFNPRFDDDGNAARVAARLGWQIAHGWR.

Mn(2+) is bound by residues H130, D155, H157, D159, D241, and D243.

This sequence belongs to the arginase family. Requires Mn(2+) as cofactor.

It catalyses the reaction N-formimidoyl-L-glutamate + H2O = formamide + L-glutamate. Its pathway is amino-acid degradation; L-histidine degradation into L-glutamate; L-glutamate from N-formimidoyl-L-glutamate (hydrolase route): step 1/1. Its function is as follows. Catalyzes the conversion of N-formimidoyl-L-glutamate to L-glutamate and formamide. This is Formimidoylglutamase from Citrobacter koseri (strain ATCC BAA-895 / CDC 4225-83 / SGSC4696).